A 194-amino-acid chain; its full sequence is Peptidyl-tRNA hydrolase (194 aa).

Y17 contributes to the tRNA binding site. The active-site Proton acceptor is the H22. F68, N70, and N116 together coordinate tRNA.

The protein belongs to the PTH family. In terms of assembly, monomer.

The protein localises to the cytoplasm. It catalyses the reaction an N-acyl-L-alpha-aminoacyl-tRNA + H2O = an N-acyl-L-amino acid + a tRNA + H(+). Functionally, hydrolyzes ribosome-free peptidyl-tRNAs (with 1 or more amino acids incorporated), which drop off the ribosome during protein synthesis, or as a result of ribosome stalling. Catalyzes the release of premature peptidyl moieties from peptidyl-tRNA molecules trapped in stalled 50S ribosomal subunits, and thus maintains levels of free tRNAs and 50S ribosomes. The protein is Peptidyl-tRNA hydrolase of Actinobacillus pleuropneumoniae serotype 7 (strain AP76).